The following is an 840-amino-acid chain: MDPALSAVRLTVQEAIHILSSSEDAGHILSTLGTLKRYLGGTEDPVLPEEKEEFATVHFSAVLRCLVSKLSPGWLELSPGGQLERLWESFFLDGPPDQAFLVLMEAIESTAGPSFRLMKMAQLLDTFLSTGRVAALMEEQCRPQTKPSFPLFQETLLSKVVGLPDLLGNCLQRDNLTQFFPQNYFPLLGQEVVQALKAVVNFLQDGLDCSVSFVSRVLGKVCIQGRKREILSVLVPQLTVLTQDSCLWQRVCWRLVEQVPDRAVEAVLTGLVEAAPRPEVLSRLLGNLVVKNKKARFVVTRKLLLLQYQHTTPMVQSLLGYLALDSQRRPLLIQVLKELLETWGCSSAVRHTPLEQQCYISKAILVCLAHLGEPELQDIRDELLASMMAGVKCRLDSSLPPVRRLGMIVAEVISSRIHPEGPLLKFQYEDDEMSRELLALATPEPAGDCSSVSRGPSPAPVDTESPVEMPEKAVESDVPPTQPQGSDSELDSDDEFIPYDMSGDRELKSSKEPLYIRDCVEALTTSEDMERWEASLKGLEGLVYRSPTATREVSVELAKVLLHLEEKTCVAEFEQLRQSALVAVTVTDPEQVAKYLTSQFYGLNYSLRQRMDILDVLVLAAQALSRPKSLQRRSQHGPPVPGTMCSPALAVSQTGNVAAPDWQVVVEERIRSKTRRFSKGCPQRELSGVPNEFSSVAGYFFFPLLQHFDRPLVTFDLLGDDQLVLGRLTHTLASLMYLAVNTTVAVPMGKALLEFVWALRFHVDIYVRRGLLSAVSSVLLSVPTERLLGDLPDELLEARSWLADVAEKDVDEDCRELAVRALLLLERLKDKLLSSSSPQP.

N-acetylmethionine is present on Met1. Hydroxyproline is present on residues Pro374, Pro419, and Pro422. Positions 443 to 497 (PEPAGDCSSVSRGPSPAPVDTESPVEMPEKAVESDVPPTQPQGSDSELDSDDEFI) are disordered. Phosphoserine is present on Ser457. Ser486 carries the phosphoserine; by CK2 modification. 3 positions are modified to phosphoserine: Ser488, Ser492, and Ser837. The span at 488–497 (SELDSDDEFI) shows a compositional bias: acidic residues.

It belongs to the TEL2 family. Component of the TTT complex composed of TELO2, TTI1 and TTI2. Interacts with ATM, ATR, MTOR, PRKDC, RUVBL2, TTI1, TTI2, SMG1 and TRRAP. Component of the mTORC1 and mTORC2 complexes. Interacts (phosphorylated form) with PIH1D1. Interaction with PIH1D1 mediates interaction of TELO2 with the R2TP complex composed of RUVBL1, RUVBL2, PIH1D1, and RPAP3. In terms of processing, hydroxylation by PHD3 is required for a proper interaction with ATR, and activation of the ATR/CHK1/p53 pathway following DNA damage. Phosphorylated at Ser-486 by CK2 following growth factor deprivation, leading to its subsequent ubiquitination by the SCF(FBXO9) complex. Phosphorylation by CK2 only takes place when TELO2 is bound to mTORC1, not mTORC2; leading to selective ubiquitination of mTORC1-associated protein. Post-translationally, ubiquitinated by the SCF(FBXO9) complex following phosphorylation by CK2 in response to growth factor deprivation, leading to its degradation by the proteasome. Only mTORC1-associated protein is ubiquitinated and degraded, leading to selective inactivation of mTORC1 to restrain cell growth and protein translation, while mTORC2 is activated due to the relief of feedback inhibition by mTORC1.

The protein localises to the cytoplasm. The protein resides in the membrane. It is found in the nucleus. It localises to the chromosome. Its subcellular location is the telomere. Regulator of the DNA damage response (DDR). Part of the TTT complex that is required to stabilize protein levels of the phosphatidylinositol 3-kinase-related protein kinase (PIKK) family proteins. The TTT complex is involved in the cellular resistance to DNA damage stresses, like ionizing radiation (IR), ultraviolet (UV) and mitomycin C (MMC). Together with the TTT complex and HSP90 may participate in the proper folding of newly synthesized PIKKs. Promotes assembly, stabilizes and maintains the activity of mTORC1 and mTORC2 complexes, which regulate cell growth and survival in response to nutrient and hormonal signals. May be involved in telomere length regulation. In Mus musculus (Mouse), this protein is Telomere length regulation protein TEL2 homolog (Telo2).